The primary structure comprises 680 residues: DNA-directed RNA polymerase subunit beta' (680 aa).

The Zn(2+) site is built by Cys-69, Cys-71, Cys-87, and Cys-90. 3 residues coordinate Mg(2+): Asp-489, Asp-491, and Asp-493.

It belongs to the RNA polymerase beta' chain family. RpoC1 subfamily. As to quaternary structure, in plastids the minimal PEP RNA polymerase catalytic core is composed of four subunits: alpha, beta, beta', and beta''. When a (nuclear-encoded) sigma factor is associated with the core the holoenzyme is formed, which can initiate transcription. Requires Mg(2+) as cofactor. It depends on Zn(2+) as a cofactor.

Its subcellular location is the plastid. It is found in the chloroplast. It catalyses the reaction RNA(n) + a ribonucleoside 5'-triphosphate = RNA(n+1) + diphosphate. In terms of biological role, DNA-dependent RNA polymerase catalyzes the transcription of DNA into RNA using the four ribonucleoside triphosphates as substrates. The sequence is that of DNA-directed RNA polymerase subunit beta' from Ranunculus macranthus (Large buttercup).